The following is a 556-amino-acid chain: Vacuolar protein 8 (556 aa).

Gly2 carries N-myristoyl glycine lipidation. S-palmitoyl cysteine attachment occurs at residues Cys4, Cys5, and Cys7. ARM repeat units follow at residues 38–74 (NRSEVDFFTDGPLRALSTLVYSENIDLQRSAALAFAE), 75–115 (VTEK…NLAV), 117–156 (DSNKVLIVNMGGLEPLIRQMMSPNIEVQCNAVGCITNLAT), 158–197 (DQNKSKIATSGALIPLTKLAKSKDLRVQRNATGALLNMTH), 199–238 (LENRQELVNAGSVPILVQLLSSTDPDVQYYCTTALSNIAV), 242–281 (NRKKLASTEPKLISQLVQLMDSTSPRVQCQATLALRNLAS), 283–322 (ANYQLEIVRAGGLPNLVTLLNSTHQPLVLAAVACIRNISI), 324–364 (PLNE…NLAA), and 408–447 (DDLKMKLLDSNIIEVLLPLTSSENGEVCGNAAAALANLCS).

Belongs to the beta-catenin family.

It localises to the vacuole membrane. Its function is as follows. Functions in both vacuole inheritance and protein targeting from the cytoplasm to vacuole. This chain is Vacuolar protein 8 (VAC8), found in Komagataella pastoris (Yeast).